Consider the following 473-residue polypeptide: Photosystem II CP43 reaction center protein (473 aa).

The propeptide occupies 1–14 (MKTLYSLRRFYHVE). An N-acetylthreonine modification is found at Thr-15. Thr-15 is modified (phosphothreonine). 5 helical membrane-spanning segments follow: residues 69-93 (LFEV…PHLA), 134-155 (LLGP…KDRN), 178-200 (KALY…RKIT), 255-275 (KPFA…LSYS), and 291-312 (WFNN…ASQA). Residue Glu-367 coordinates [CaMn4O5] cluster. A helical transmembrane segment spans residues 447-471 (RARAAAAGFEKGIDRDFEPVLSMTP).

It belongs to the PsbB/PsbC family. PsbC subfamily. PSII is composed of 1 copy each of membrane proteins PsbA, PsbB, PsbC, PsbD, PsbE, PsbF, PsbH, PsbI, PsbJ, PsbK, PsbL, PsbM, PsbT, PsbX, PsbY, PsbZ, Psb30/Ycf12, at least 3 peripheral proteins of the oxygen-evolving complex and a large number of cofactors. It forms dimeric complexes. Binds multiple chlorophylls and provides some of the ligands for the Ca-4Mn-5O cluster of the oxygen-evolving complex. It may also provide a ligand for a Cl- that is required for oxygen evolution. PSII binds additional chlorophylls, carotenoids and specific lipids. is required as a cofactor.

It is found in the plastid. Its subcellular location is the chloroplast thylakoid membrane. One of the components of the core complex of photosystem II (PSII). It binds chlorophyll and helps catalyze the primary light-induced photochemical processes of PSII. PSII is a light-driven water:plastoquinone oxidoreductase, using light energy to abstract electrons from H(2)O, generating O(2) and a proton gradient subsequently used for ATP formation. The sequence is that of Photosystem II CP43 reaction center protein from Atropa belladonna (Belladonna).